We begin with the raw amino-acid sequence, 688 residues long: DNA ligase (688 aa).

Residues 51–55 (DSEYD), 100–101 (SL), and glutamate 129 each bind NAD(+). The active-site N6-AMP-lysine intermediate is the lysine 131. The NAD(+) site is built by arginine 152, glutamate 189, lysine 308, and lysine 332. Zn(2+)-binding residues include cysteine 426, cysteine 429, cysteine 444, and cysteine 450. In terms of domain architecture, BRCT spans 609 to 688 (ADEQPLKGQT…DELLALLANS (80 aa)).

Belongs to the NAD-dependent DNA ligase family. LigA subfamily. Requires Mg(2+) as cofactor. Mn(2+) is required as a cofactor.

It carries out the reaction NAD(+) + (deoxyribonucleotide)n-3'-hydroxyl + 5'-phospho-(deoxyribonucleotide)m = (deoxyribonucleotide)n+m + AMP + beta-nicotinamide D-nucleotide.. DNA ligase that catalyzes the formation of phosphodiester linkages between 5'-phosphoryl and 3'-hydroxyl groups in double-stranded DNA using NAD as a coenzyme and as the energy source for the reaction. It is essential for DNA replication and repair of damaged DNA. This is DNA ligase from Shewanella sp. (strain MR-7).